Consider the following 639-residue polypeptide: Coiled-coil domain-containing protein 93 homolog (639 aa).

The tract at residues 250–275 (KLESQLSGKDGSGKDTTEAEREEEEK) is disordered. The segment covering 260-275 (GSGKDTTEAEREEEEK) has biased composition (basic and acidic residues). Residues 332–492 (AEKLHRQKIT…KNRDISLIQR (161 aa)) adopt a coiled-coil conformation.

It belongs to the CCDC93 family.

The polypeptide is Coiled-coil domain-containing protein 93 homolog (Dictyostelium discoideum (Social amoeba)).